The chain runs to 121 residues: Large ribosomal subunit protein bL12 (121 aa).

Belongs to the bacterial ribosomal protein bL12 family. Homodimer. Part of the ribosomal stalk of the 50S ribosomal subunit. Forms a multimeric L10(L12)X complex, where L10 forms an elongated spine to which 2 to 4 L12 dimers bind in a sequential fashion. Binds GTP-bound translation factors.

In terms of biological role, forms part of the ribosomal stalk which helps the ribosome interact with GTP-bound translation factors. Is thus essential for accurate translation. In Alkaliphilus oremlandii (strain OhILAs) (Clostridium oremlandii (strain OhILAs)), this protein is Large ribosomal subunit protein bL12.